Consider the following 414-residue polypeptide: Isocitrate dehydrogenase [NADP] cytoplasmic (414 aa).

Serine 2 is subject to N-acetylserine. Phosphotyrosine is present on tyrosine 42. Position 75 to 77 (75 to 77 (TIT)) interacts with NADP(+). Threonine 77 lines the substrate pocket. Lysine 81 is modified (N6-acetyllysine). Arginine 82 lines the NADP(+) pocket. Substrate contacts are provided by residues 94–100 (SPNGTIR) and arginine 109. The residue at position 126 (lysine 126) is an N6-succinyllysine. Residues arginine 132 and lysine 212 each contribute to the substrate site. An N6-acetyllysine mark is found at lysine 224 and lysine 233. Aspartate 252 contacts Mn(2+). Residue lysine 260 coordinates NADP(+). Residues aspartate 275 and aspartate 279 each contribute to the Mn(2+) site. 310-315 (GTVTRH) is a binding site for NADP(+). Residue lysine 321 is modified to N6-acetyllysine. Asparagine 328 lines the NADP(+) pocket. Residue serine 389 is modified to Phosphoserine. Lysine 400 is subject to N6-succinyllysine.

The protein belongs to the isocitrate and isopropylmalate dehydrogenases family. In terms of assembly, homodimer. Mg(2+) is required as a cofactor. It depends on Mn(2+) as a cofactor. In terms of processing, acetylation at Lys-374 dramatically reduces catalytic activity.

It is found in the cytoplasm. The protein resides in the cytosol. The enzyme catalyses D-threo-isocitrate + NADP(+) = 2-oxoglutarate + CO2 + NADPH. Its function is as follows. Catalyzes the NADP(+)-dependent oxidative decarboxylation of isocitrate (D-threo-isocitrate) to 2-ketoglutarate (2-oxoglutarate), which is required by other enzymes such as the phytanoyl-CoA dioxygenase. Plays a critical role in the generation of NADPH, an important cofactor in many biosynthesis pathways. May act as a corneal epithelial crystallin and may be involved in maintaining corneal epithelial transparency. The sequence is that of Isocitrate dehydrogenase [NADP] cytoplasmic (IDH1) from Ovis aries (Sheep).